The primary structure comprises 150 residues: Lipoprotein signal peptidase (150 aa).

3 consecutive transmembrane segments (helical) span residues 5–25, 59–79, and 83–103; these read LSLV…NWVV, QQWF…WFLW, and GQNW…GNFI. Catalysis depends on residues Asp-113 and Asp-129. A helical membrane pass occupies residues 124–144; the sequence is IFNIADILLSVGFVVLFIAIL.

This sequence belongs to the peptidase A8 family.

The protein localises to the cell membrane. The enzyme catalyses Release of signal peptides from bacterial membrane prolipoproteins. Hydrolyzes -Xaa-Yaa-Zaa-|-(S,diacylglyceryl)Cys-, in which Xaa is hydrophobic (preferably Leu), and Yaa (Ala or Ser) and Zaa (Gly or Ala) have small, neutral side chains.. Its pathway is protein modification; lipoprotein biosynthesis (signal peptide cleavage). Functionally, this protein specifically catalyzes the removal of signal peptides from prolipoproteins. This Lactococcus lactis subsp. cremoris (strain MG1363) protein is Lipoprotein signal peptidase.